The sequence spans 3101 residues: Probable polyketide synthase 32 (3101 aa).

Positions 27 to 465 (SGDVAVIGIG…GSNVCLILSE (439 aa)) constitute a Ketosynthase family 3 (KS3) domain. Catalysis depends on for beta-ketoacyl synthase activity residues cysteine 199, histidine 338, and histidine 388. An acyl/malonyl transferase region spans residues 664–697 (GVSADIIIGHSLGEVSSAYCSGMIDFETLCYLTY). Serine 674 acts as the For acyl/malonyl transferase activity in catalysis. Residues 965–1087 (GPSINNLGNN…GNFSLTKHNS (123 aa)) are N-terminal hotdog fold. A PKS/mFAS DH domain is found at 965–1287 (GPSINNLGNN…CTLVSLPNPE (323 aa)). Residue histidine 999 is the Proton acceptor; for dehydratase activity of the active site. Residues 1104–1287 (NFTSISKQDL…CTLVSLPNPE (184 aa)) form a C-terminal hotdog fold region. Aspartate 1176 functions as the Proton donor; for dehydratase activity in the catalytic mechanism. The tract at residues 1209–1236 (KNGNNNDDDEESNNNNNNNNNNNNNNNN) is disordered. Positions 1221 to 1236 (NNNNNNNNNNNNNNNN) are enriched in low complexity. One can recognise a Carrier domain in the interval 2550 to 2627 (DNNEIIRSTI…QSIEIIKSAN (78 aa)). Serine 2587 carries the O-(pantetheine 4'-phosphoryl)serine modification. The segment at 2627 to 2648 (NNKNNKNNNNNNNNKTNKNNNN) is disordered.

The cofactor is pantetheine 4'-phosphate.

Its function is as follows. Probable polyketide synthase. This is Probable polyketide synthase 32 (pks32) from Dictyostelium discoideum (Social amoeba).